The sequence spans 178 residues: Protein GrpE (178 aa).

The protein belongs to the GrpE family. Homodimer.

It is found in the cytoplasm. Functionally, participates actively in the response to hyperosmotic and heat shock by preventing the aggregation of stress-denatured proteins, in association with DnaK and GrpE. It is the nucleotide exchange factor for DnaK and may function as a thermosensor. Unfolded proteins bind initially to DnaJ; upon interaction with the DnaJ-bound protein, DnaK hydrolyzes its bound ATP, resulting in the formation of a stable complex. GrpE releases ADP from DnaK; ATP binding to DnaK triggers the release of the substrate protein, thus completing the reaction cycle. Several rounds of ATP-dependent interactions between DnaJ, DnaK and GrpE are required for fully efficient folding. The sequence is that of Protein GrpE from Bordetella avium (strain 197N).